Consider the following 383-residue polypeptide: Chaperone protein DnaJ (383 aa).

In terms of domain architecture, J spans 5–70 (DYYEVLGVAK…EKRAAYDRFG (66 aa)). A CR-type zinc finger spans residues 139-217 (GKTETIRIPT…CSGAGRVNRE (79 aa)). Cys152, Cys155, Cys169, Cys172, Cys191, Cys194, Cys205, and Cys208 together coordinate Zn(2+). CXXCXGXG motif repeat units follow at residues 152 to 159 (CEACSGTG), 169 to 176 (CSTCGGYG), 191 to 198 (CPNCHGRG), and 205 to 212 (CTACSGAG).

It belongs to the DnaJ family. As to quaternary structure, homodimer. It depends on Zn(2+) as a cofactor.

The protein resides in the cytoplasm. Its function is as follows. Participates actively in the response to hyperosmotic and heat shock by preventing the aggregation of stress-denatured proteins and by disaggregating proteins, also in an autonomous, DnaK-independent fashion. Unfolded proteins bind initially to DnaJ; upon interaction with the DnaJ-bound protein, DnaK hydrolyzes its bound ATP, resulting in the formation of a stable complex. GrpE releases ADP from DnaK; ATP binding to DnaK triggers the release of the substrate protein, thus completing the reaction cycle. Several rounds of ATP-dependent interactions between DnaJ, DnaK and GrpE are required for fully efficient folding. Also involved, together with DnaK and GrpE, in the DNA replication of plasmids through activation of initiation proteins. This is Chaperone protein DnaJ from Methylorubrum populi (strain ATCC BAA-705 / NCIMB 13946 / BJ001) (Methylobacterium populi).